The following is a 303-amino-acid chain: Probable cat1 operon transcriptional activator (303 aa).

The 58-residue stretch at 1-58 folds into the HTH lysR-type domain; the sequence is MDLRQFRYFVAVARERNFTRAARQLNIAQPPLSRQIQLLEEEVGVPLLIRNSRPVQLT. Residues 18-37 constitute a DNA-binding region (H-T-H motif); it reads FTRAARQLNIAQPPLSRQIQ.

This sequence belongs to the LysR transcriptional regulatory family.

Its function is as follows. Probable positive regulator of the cat1 operon which encode enzymes responsible for the degradation of catechol to acetyl-CoA via the beta-ketoadipate pathway. This chain is Probable cat1 operon transcriptional activator, found in Acinetobacter lwoffii.